A 486-amino-acid chain; its full sequence is BTB/POZ domain and ankyrin repeat-containing protein NBCL (486 aa).

In terms of domain architecture, BTB spans 25 to 115; that stretch reads SDVTFSVEGR…LYSGQVSIVP (91 aa). The C2HC NPR-type zinc finger occupies 121–135; sequence RPNCGERGCWHTHCS. 4 residues coordinate Zn(2+): Cys-124, Cys-129, His-131, and Cys-134. ANK repeat units lie at residues 257–286, 287–316, 321–350, and 354–388; these read QKIRRMRRALDSSDVELVKLMVMGEGLNLD, EALALHYAVENCSREVVKALLELGAADVNY, AGKTPLHIAAEMVSPDMVAVLLDHHADPNV, and DNVTPLDILRTLTSDFLFKGAIPGLTHIEPNKLRL. 2 disordered regions span residues 403 to 441 and 464 to 486; these read EEGNANNNPPSSTTTTLPMYHHPMNDDHNSSSSSGNNHN and QMSDDHGGRHGDPAMYHHSHHDY. 2 stretches are compositionally biased toward low complexity: residues 406-418 and 432-441; these read NANNNPPSSTTTT and SSSSSGNNHN. The segment covering 466–475 has biased composition (basic and acidic residues); sequence SDDHGGRHGD.

This sequence belongs to the plant 'ANKYRIN-BTB/POZ' family. 'NOOT-BOP-COCH-like' (NBCL) subfamily. Homodimer.

It is found in the nucleus. It localises to the cytoplasm. Its subcellular location is the cell membrane. Its pathway is protein modification; protein ubiquitination. May act as a substrate-specific adapter of an E3 ubiquitin-protein ligase complex (CUL3-RBX1-BTB) which mediates the ubiquitination and subsequent proteasomal degradation of target proteins. Transcriptional co-regulator involved in the promotion of leaf and floral meristem fate and determinacy. Necessary for the development of stipules at the base of petioles. Required for the abscission of senescent organs, probably by regulating the cell wall disorganization in abscission zones (AZs, e.g. pulvini at the base of leaves). Promotes slightly root-cap border cells separation from the root tip. Involved in the coordination of the symbiotic nodule developmental program; promotes the formation of root nodules by interacting directly with APP1 to modulate the expression of the nuclear transcription factor Y subunit (NF-YA1), a key nodulin. Necessary for the robust maintenance of nodule identity throughout the nodule developmental program. The chain is BTB/POZ domain and ankyrin repeat-containing protein NBCL from Lupinus angustifolius (Narrow-leaved blue lupine).